Reading from the N-terminus, the 187-residue chain is T-cell receptor-associated transmembrane adapter 1 (187 aa).

The Extracellular portion of the chain corresponds to 1 to 7 (MSGSSGC). The helical; Signal-anchor for type III membrane protein transmembrane segment at 8 to 28 (PFFLWGLLAFLGLALVISLIF) threads the bilayer. Residues 29 to 187 (NISHYVEKQR…LIRAKREPVI (159 aa)) lie on the Cytoplasmic side of the membrane. Phosphoserine is present on Ser46. Phosphotyrosine is present on Tyr80. Residues 80-83 (YEQM) are interaction with PIK3R1. Positions 117-138 (SVKGKRRRPRKQNTNVSDRGKD) are disordered.

Homodimer; disulfide-linked. Interacts with CD3Z. When phosphorylated, interacts with PIK3R1. Phosphorylated on tyrosines upon TCR activation. In terms of tissue distribution, present in T-cells (at protein level).

It localises to the cell membrane. In terms of biological role, stabilizes the TCR (T-cell antigen receptor)/CD3 complex at the surface of T-cells. In Mus musculus (Mouse), this protein is T-cell receptor-associated transmembrane adapter 1 (Trat1).